The chain runs to 712 residues: Ribosomal RNA large subunit methyltransferase K/L (712 aa).

The region spanning 43-154 is the THUMP domain; the sequence is TAYRCCLWTR…GEKGVLGLDM (112 aa).

Belongs to the methyltransferase superfamily. RlmKL family.

It localises to the cytoplasm. It carries out the reaction guanosine(2445) in 23S rRNA + S-adenosyl-L-methionine = N(2)-methylguanosine(2445) in 23S rRNA + S-adenosyl-L-homocysteine + H(+). The enzyme catalyses guanosine(2069) in 23S rRNA + S-adenosyl-L-methionine = N(2)-methylguanosine(2069) in 23S rRNA + S-adenosyl-L-homocysteine + H(+). In terms of biological role, specifically methylates the guanine in position 2445 (m2G2445) and the guanine in position 2069 (m7G2069) of 23S rRNA. This chain is Ribosomal RNA large subunit methyltransferase K/L, found in Photobacterium profundum (strain SS9).